We begin with the raw amino-acid sequence, 215 residues long: MSDNAQLTGLCDRFRGFYPVVIDVETAGFNAKTDALLEIAAITLKMDEQGWLMPDTTLHFHVEPFVGANLQPEALAFNGIDPNDPDRGAVSEYEALHEIFKVVRKGIKASGCNRAIMVAHNANFDHSFMIAAAERASLKRNPFHPFATFDTAALAGLALGQTVLSKACQTAGMDFDSTQAHSALYDTERTAVLFCEIVNRWKRLGGWPLPAAEEV.

Positions 20–194 (VVIDVETAGF…YDTERTAVLF (175 aa)) constitute an Exonuclease domain. D23, E25, H181, and D186 together coordinate Mg(2+). The active-site Proton donor/acceptor is the H181.

It belongs to the RNase T family. Homodimer. Mg(2+) serves as cofactor.

Its function is as follows. Trims short 3' overhangs of a variety of RNA species, leaving a one or two nucleotide 3' overhang. Responsible for the end-turnover of tRNA: specifically removes the terminal AMP residue from uncharged tRNA (tRNA-C-C-A). Also appears to be involved in tRNA biosynthesis. This Shigella boydii serotype 4 (strain Sb227) protein is Ribonuclease T.